A 386-amino-acid chain; its full sequence is Succinate--CoA ligase [ADP-forming] subunit beta (386 aa).

Residues 9-244 (KAVLRSYGVS…LEEEDSKEIE (236 aa)) enclose the ATP-grasp domain. ATP is bound by residues K46, 53–55 (GRG), E99, C102, and E107. N199 and D213 together coordinate Mg(2+). Substrate contacts are provided by residues N264 and 321–323 (GIM).

This sequence belongs to the succinate/malate CoA ligase beta subunit family. As to quaternary structure, heterotetramer of two alpha and two beta subunits. The cofactor is Mg(2+).

The catalysed reaction is succinate + ATP + CoA = succinyl-CoA + ADP + phosphate. It catalyses the reaction GTP + succinate + CoA = succinyl-CoA + GDP + phosphate. It functions in the pathway carbohydrate metabolism; tricarboxylic acid cycle; succinate from succinyl-CoA (ligase route): step 1/1. Succinyl-CoA synthetase functions in the citric acid cycle (TCA), coupling the hydrolysis of succinyl-CoA to the synthesis of either ATP or GTP and thus represents the only step of substrate-level phosphorylation in the TCA. The beta subunit provides nucleotide specificity of the enzyme and binds the substrate succinate, while the binding sites for coenzyme A and phosphate are found in the alpha subunit. This is Succinate--CoA ligase [ADP-forming] subunit beta from Bacillus mycoides (strain KBAB4) (Bacillus weihenstephanensis).